Consider the following 137-residue polypeptide: Phosphoribosyl-AMP cyclohydrolase (137 aa).

Mg(2+) is bound at residue Asp84. A Zn(2+)-binding site is contributed by Cys85. 2 residues coordinate Mg(2+): Asp86 and Asp88. Zn(2+)-binding residues include Cys101 and Cys108.

It belongs to the PRA-CH family. As to quaternary structure, homodimer. Requires Mg(2+) as cofactor. Zn(2+) serves as cofactor.

It is found in the cytoplasm. It carries out the reaction 1-(5-phospho-beta-D-ribosyl)-5'-AMP + H2O = 1-(5-phospho-beta-D-ribosyl)-5-[(5-phospho-beta-D-ribosylamino)methylideneamino]imidazole-4-carboxamide. It functions in the pathway amino-acid biosynthesis; L-histidine biosynthesis; L-histidine from 5-phospho-alpha-D-ribose 1-diphosphate: step 3/9. In terms of biological role, catalyzes the hydrolysis of the adenine ring of phosphoribosyl-AMP. The protein is Phosphoribosyl-AMP cyclohydrolase of Chlorobium phaeobacteroides (strain DSM 266 / SMG 266 / 2430).